Reading from the N-terminus, the 618-residue chain is UvrABC system protein C (618 aa).

The GIY-YIG domain occupies 13–92 (DKPGVYLMKN…IKKYRPKYNI (80 aa)). A UVR domain is found at 204-239 (LDIVENFKLNMEKAAENLEFEKAAMLRDKINIIEKI).

It belongs to the UvrC family. As to quaternary structure, interacts with UvrB in an incision complex.

It localises to the cytoplasm. In terms of biological role, the UvrABC repair system catalyzes the recognition and processing of DNA lesions. UvrC both incises the 5' and 3' sides of the lesion. The N-terminal half is responsible for the 3' incision and the C-terminal half is responsible for the 5' incision. The sequence is that of UvrABC system protein C from Clostridium botulinum (strain ATCC 19397 / Type A).